Reading from the N-terminus, the 75-residue chain is Small ribosomal subunit protein bS18 (75 aa).

It belongs to the bacterial ribosomal protein bS18 family. Part of the 30S ribosomal subunit. Forms a tight heterodimer with protein bS6.

In terms of biological role, binds as a heterodimer with protein bS6 to the central domain of the 16S rRNA, where it helps stabilize the platform of the 30S subunit. The protein is Small ribosomal subunit protein bS18 of Acinetobacter baylyi (strain ATCC 33305 / BD413 / ADP1).